Consider the following 480-residue polypeptide: Aspartyl/glutamyl-tRNA(Asn/Gln) amidotransferase subunit B (480 aa).

This sequence belongs to the GatB/GatE family. GatB subfamily. As to quaternary structure, heterotrimer of A, B and C subunits.

It catalyses the reaction L-glutamyl-tRNA(Gln) + L-glutamine + ATP + H2O = L-glutaminyl-tRNA(Gln) + L-glutamate + ADP + phosphate + H(+). The catalysed reaction is L-aspartyl-tRNA(Asn) + L-glutamine + ATP + H2O = L-asparaginyl-tRNA(Asn) + L-glutamate + ADP + phosphate + 2 H(+). Its function is as follows. Allows the formation of correctly charged Asn-tRNA(Asn) or Gln-tRNA(Gln) through the transamidation of misacylated Asp-tRNA(Asn) or Glu-tRNA(Gln) in organisms which lack either or both of asparaginyl-tRNA or glutaminyl-tRNA synthetases. The reaction takes place in the presence of glutamine and ATP through an activated phospho-Asp-tRNA(Asn) or phospho-Glu-tRNA(Gln). This Streptococcus pneumoniae (strain 70585) protein is Aspartyl/glutamyl-tRNA(Asn/Gln) amidotransferase subunit B.